The sequence spans 187 residues: ADP-ribosylation factor-like protein 9 (187 aa).

GTP-binding positions include 25–32 (GLDGAGKT), 69–73 (EIGGS), and 126–129 (NKQD).

It belongs to the small GTPase superfamily. Arf family.

The chain is ADP-ribosylation factor-like protein 9 (ARL9) from Homo sapiens (Human).